Reading from the N-terminus, the 494-residue chain is NADPH:adrenodoxin oxidoreductase, mitochondrial (494 aa).

The N-terminal 34 residues, 1 to 34 (MAPRCWHWWRWSAWSGLRPSPSRSTPTPGFCQKF), are a transit peptide targeting the mitochondrion. The FAD site is built by Ala51, Glu72, Leu80, and Val116. Residues 187–190 (QGNV), 231–232 (RR), and Glu243 contribute to the NADP(+) site. Ser313 bears the Phosphoserine mark. Residues Trp401 and 408–410 (GVI) each bind FAD. Gly408 contributes to the NADP(+) binding site.

Belongs to the ferredoxin--NADP reductase type 1 family. As to quaternary structure, monomer. Interacts directly with FDX1. It depends on FAD as a cofactor. As to expression, expressed in the adrenal, testis and ovary and to a lesser extent in the liver and kidney.

The protein localises to the mitochondrion inner membrane. The catalysed reaction is 2 reduced [adrenodoxin] + NADP(+) + H(+) = 2 oxidized [adrenodoxin] + NADPH. It carries out the reaction 2 reduced [2Fe-2S]-[ferredoxin] + NADP(+) + H(+) = 2 oxidized [2Fe-2S]-[ferredoxin] + NADPH. It participates in steroid metabolism; cholesterol metabolism. In terms of biological role, serves as the first electron transfer protein in all the mitochondrial P450 systems including cholesterol side chain cleavage in all steroidogenic tissues, steroid 11-beta hydroxylation in the adrenal cortex, 25-OH-vitamin D3-24 hydroxylation in the kidney, and sterol C-27 hydroxylation in the liver. Also acts as a ferredoxin--NADP(+) reductase essential for coenzyme Q biosynthesis: together with FDX2, transfers the electrons required for the hydroxylation reaction performed by COQ6. The polypeptide is NADPH:adrenodoxin oxidoreductase, mitochondrial (Fdxr) (Mus musculus (Mouse)).